Consider the following 425-residue polypeptide: TRAF family member-associated NF-kappa-B activator (425 aa).

M1 carries the post-translational modification N-acetylmethionine. Residues 1-31 (MDKNIGEQLNKAYEAFRQACMDRDSAVKELQ) form a necessary for interaction with ZC3H12A region. A coiled-coil region spans residues 22–62 (DRDSAVKELQQKTENYEQRIREQQEQLSLQQTIIDKLKSQL). Positions 70–191 (DNNYGCVPLL…QCTDKTDKQE (122 aa)) are necessary for interaction with TRAF6. Phosphoserine occurs at positions 126 and 129. An interaction with TBK1 and IKBKE region spans residues 133 to 172 (HERGNIEKTFWDLKEEFHKICMLAKAQKDHLSKLNIPDTA). The interval 172–191 (ATETQCSVPIQCTDKTDKQE) is TRAF family member interaction. Phosphoserine occurs at positions 178 and 208. The residue at position 213 (T213) is a Phosphothreonine. S225, S228, S341, S354, and S357 each carry phosphoserine. The UBZ1-type zinc finger occupies 393-420 (PRVCEFCQAVFPPSITSRGDFLRHLNSH). C396, C399, H416, and H420 together coordinate Zn(2+).

Homodimer. Found in a deubiquitination complex with TANK, USP10 and ZC3H12A; this complex inhibits genotoxic stress- or interleukin-1-beta-mediated NF-kappaB activation by promoting IKBKG or TRAF6 deubiquitination. Interacts with IKBKG; this interaction increases in response to DNA damage. Interacts with TRAF6; this interaction increases in response to DNA damage and recruits USP10 to the ubiquitinated TRAF6. Interacts with USP10; this interaction increases in response to DNA damage. Interacts with ZC3H12A; this interaction increases in response to DNA damage. Interacts with TBK1. Interacts with IKBKE. Also interacts with TRAF1, TRAF2, and TRAF3 by binding to their TRAF-C domains; the interaction with TRAF2 is disrupted by the phosphorylation of TANK by IKBKE. Interacts more strongly with TRAF1 and TRAF2 than TRAF3. Interacts with IKBKG; the interaction is enhanced by IKBKE and TBK1. Part of a ternary complex consisting of TANK, IKBKB and IKBKG. As to quaternary structure, (Microbial infection) Interacts with vaccinia virus protein C6. In terms of assembly, (Microbial infection) Interacts with Seneca Valley virus protease 3C; this interaction allows the cleavage of TANK and subsequent suppression of host innate immunity. Post-translationally, phosphorylated by IKBKE. (Microbial infection) Cleaved by encephalomyocarditis virus (EMCV) protease 3C. This cleavage allows the virus to disrupt the TANK-TBK1-IKKepsilon-IRF3 complex, thereby inhibiting the induction of the IFN-beta signal pathway. In terms of processing, (Microbial infection) Cleaved by Seneca Valley virus protease 3C allowing the virus to suppress interferon type-I through both RIG-I and Toll-like receptor-dependent pathways. As to expression, ubiquitous.

The protein localises to the cytoplasm. Functionally, adapter protein involved in I-kappa-B-kinase (IKK) regulation which constitutively binds TBK1 and IKBKE playing a role in antiviral innate immunity. Acts as a regulator of TRAF function by maintaining them in a latent state. Blocks TRAF2 binding to LMP1 and inhibits LMP1-mediated NF-kappa-B activation. Negatively regulates NF-kappaB signaling and cell survival upon DNA damage. Plays a role as an adapter to assemble ZC3H12A, USP10 in a deubiquitination complex which plays a negative feedback response to attenuate NF-kappaB activation through the deubiquitination of IKBKG or TRAF6 in response to interleukin-1-beta (IL1B) stimulation or upon DNA damage. Promotes UBP10-induced deubiquitination of TRAF6 in response to DNA damage. May control negatively TRAF2-mediated NF-kappa-B activation signaled by CD40, TNFR1 and TNFR2. This Homo sapiens (Human) protein is TRAF family member-associated NF-kappa-B activator (TANK).